Here is an 89-residue protein sequence, read N- to C-terminus: UPF0473 protein Helmi_02360 (89 aa).

Belongs to the UPF0473 family.

This is UPF0473 protein Helmi_02360 from Heliobacterium modesticaldum (strain ATCC 51547 / Ice1).